We begin with the raw amino-acid sequence, 437 residues long: GTPase Obg (437 aa).

An Obg domain is found at 2–160; the sequence is SMFLDTAKIS…RELQLELKIL (159 aa). Positions 127-146 are disordered; the sequence is GNIRFATPRNPAPEIAENGE. The 178-residue stretch at 161–338 folds into the OBG-type G domain; the sequence is ADVGLVGFPS…LLEATAELLD (178 aa). Residues 167 to 174, 192 to 196, 214 to 217, 284 to 287, and 319 to 321 contribute to the GTP site; these read GFPSVGKS, FTTIV, DLPG, NKMD, and SSL. Residues S174 and T194 each contribute to the Mg(2+) site. Residues 359-437 enclose the OCT domain; it reads GFNEEERPFE…IGNFEFEFVD (79 aa).

The protein belongs to the TRAFAC class OBG-HflX-like GTPase superfamily. OBG GTPase family. Monomer. Mg(2+) is required as a cofactor.

It localises to the cytoplasm. In terms of biological role, an essential GTPase which binds GTP, GDP and possibly (p)ppGpp with moderate affinity, with high nucleotide exchange rates and a fairly low GTP hydrolysis rate. Plays a role in control of the cell cycle, stress response, ribosome biogenesis and in those bacteria that undergo differentiation, in morphogenesis control. In Streptococcus thermophilus (strain ATCC BAA-491 / LMD-9), this protein is GTPase Obg.